Here is a 405-residue protein sequence, read N- to C-terminus: 4-hydroxy-3-methylbut-2-en-1-yl diphosphate synthase (flavodoxin) (405 aa).

[4Fe-4S] cluster is bound by residues Cys-297, Cys-300, Cys-343, and Glu-350.

The protein belongs to the IspG family. Requires [4Fe-4S] cluster as cofactor.

The enzyme catalyses (2E)-4-hydroxy-3-methylbut-2-enyl diphosphate + oxidized [flavodoxin] + H2O + 2 H(+) = 2-C-methyl-D-erythritol 2,4-cyclic diphosphate + reduced [flavodoxin]. It participates in isoprenoid biosynthesis; isopentenyl diphosphate biosynthesis via DXP pathway; isopentenyl diphosphate from 1-deoxy-D-xylulose 5-phosphate: step 5/6. In terms of biological role, converts 2C-methyl-D-erythritol 2,4-cyclodiphosphate (ME-2,4cPP) into 1-hydroxy-2-methyl-2-(E)-butenyl 4-diphosphate. The sequence is that of 4-hydroxy-3-methylbut-2-en-1-yl diphosphate synthase (flavodoxin) from Francisella tularensis subsp. mediasiatica (strain FSC147).